Here is an 885-residue protein sequence, read N- to C-terminus: Conidiophore development regulator abaA (885 aa).

The span at 1 to 20 (MSSLFQPRPVLSSQRYSQSP) shows a compositional bias: polar residues. Residues 1-25 (MSSLFQPRPVLSSQRYSQSPDYVDT) are disordered. Positions 124–217 (QKDKGGVWRR…QVVKKFFEDL (94 aa)) form a DNA-binding region, TEA. 2 disordered regions span residues 502-539 (KEKR…WTRR) and 817-885 (APGS…TAGW). Composition is skewed to basic and acidic residues over residues 508-521 (YADG…ERAG) and 831-840 (VESHAGDHHG).

The protein belongs to the TEC1 family.

It is found in the nucleus. Its function is as follows. BrlA, abaA and wetA are pivotal regulators of conidiophore development and conidium maturation. They act individually and together to regulate their own expression and that of numerous other sporulation-specific genes. BrlA, abaA and wetA act together to positively regulate the expression of the Pks1 gene cluster that mediates the biosynthesis of an anthraquinone derivative pigment that contributes to conidial pigmentation that provides protection from UV radiation, heat and cold stress. In Metarhizium robertsii (strain ARSEF 23 / ATCC MYA-3075) (Metarhizium anisopliae (strain ARSEF 23)), this protein is Conidiophore development regulator abaA.